Here is a 304-residue protein sequence, read N- to C-terminus: Aspartate carbamoyltransferase catalytic subunit (304 aa).

Residues arginine 54 and threonine 55 each contribute to the carbamoyl phosphate site. Lysine 83 serves as a coordination point for L-aspartate. Residues arginine 104, histidine 132, and glutamine 135 each contribute to the carbamoyl phosphate site. Residues arginine 165 and arginine 226 each contribute to the L-aspartate site. 2 residues coordinate carbamoyl phosphate: leucine 265 and proline 266.

This sequence belongs to the aspartate/ornithine carbamoyltransferase superfamily. ATCase family. Heterooligomer of catalytic and regulatory chains.

The enzyme catalyses carbamoyl phosphate + L-aspartate = N-carbamoyl-L-aspartate + phosphate + H(+). The protein operates within pyrimidine metabolism; UMP biosynthesis via de novo pathway; (S)-dihydroorotate from bicarbonate: step 2/3. In terms of biological role, catalyzes the condensation of carbamoyl phosphate and aspartate to form carbamoyl aspartate and inorganic phosphate, the committed step in the de novo pyrimidine nucleotide biosynthesis pathway. This is Aspartate carbamoyltransferase catalytic subunit from Pyrobaculum islandicum (strain DSM 4184 / JCM 9189 / GEO3).